A 490-amino-acid chain; its full sequence is AP-5 complex subunit mu-1 (490 aa).

In terms of domain architecture, MHD spans 206 to 476 (KPQVSISITE…LISSDYYIWN (271 aa)).

Belongs to the adaptor complexes medium subunit family. As to quaternary structure, probably part of the adaptor protein complex 5 (AP-5) a tetramer composed of AP5B1, AP5M1, AP5S1 and AP5Z1.

Its subcellular location is the cytoplasm. It is found in the cytosol. It localises to the late endosome membrane. The protein localises to the lysosome membrane. In terms of biological role, as part of AP-5, a probable fifth adaptor protein complex it may be involved in endosomal transport. The protein is AP-5 complex subunit mu-1 (AP5M1) of Bos taurus (Bovine).